The sequence spans 307 residues: Malate dehydrogenase (307 aa).

NAD(+) contacts are provided by residues 8-13 (GAGNVG) and Asp32. Positions 81 and 87 each coordinate substrate. NAD(+) is bound by residues Asn94 and 117–119 (VSN). Asn119 and Arg150 together coordinate substrate. His174 (proton acceptor) is an active-site residue.

This sequence belongs to the LDH/MDH superfamily. MDH type 3 family.

It catalyses the reaction (S)-malate + NAD(+) = oxaloacetate + NADH + H(+). Functionally, catalyzes the reversible oxidation of malate to oxaloacetate. The chain is Malate dehydrogenase from Dehalococcoides mccartyi (strain ATCC BAA-2100 / JCM 16839 / KCTC 5957 / BAV1).